We begin with the raw amino-acid sequence, 252 residues long: Uridylate kinase (252 aa).

Lys27–Gly30 lines the ATP pocket. Residue Gly68 coordinates UMP. Residues Gly69 and Arg73 each coordinate ATP. Residues Asp88 and Met149 to Thr156 contribute to the UMP site. ATP is bound by residues Tyr182 and Asp185.

Belongs to the UMP kinase family. As to quaternary structure, homohexamer.

The protein resides in the cytoplasm. It catalyses the reaction UMP + ATP = UDP + ADP. The protein operates within pyrimidine metabolism; CTP biosynthesis via de novo pathway; UDP from UMP (UMPK route): step 1/1. Its activity is regulated as follows. Inhibited by UTP. Catalyzes the reversible phosphorylation of UMP to UDP. In Mycobacterium sp. (strain JLS), this protein is Uridylate kinase.